Reading from the N-terminus, the 440-residue chain is Chromosome partition protein MukF (440 aa).

The leucine-zipper stretch occupies residues 208 to 236 (LSETSGTLRELQDTLEAAGDKLQANLLQI).

This sequence belongs to the MukF family. Interacts, and probably forms a ternary complex, with MukE and MukB via its C-terminal region. The complex formation is stimulated by calcium or magnesium. It is required for an interaction between MukE and MukB.

It is found in the cytoplasm. Its subcellular location is the nucleoid. Its function is as follows. Involved in chromosome condensation, segregation and cell cycle progression. May participate in facilitating chromosome segregation by condensation DNA from both sides of a centrally located replisome during cell division. Not required for mini-F plasmid partitioning. Probably acts via its interaction with MukB and MukE. Overexpression results in anucleate cells. It has a calcium binding activity. The chain is Chromosome partition protein MukF from Cronobacter sakazakii (strain ATCC BAA-894) (Enterobacter sakazakii).